Consider the following 104-residue polypeptide: Integration host factor subunit beta (104 aa).

Belongs to the bacterial histone-like protein family. As to quaternary structure, heterodimer of an alpha and a beta chain.

Functionally, this protein is one of the two subunits of integration host factor, a specific DNA-binding protein that functions in genetic recombination as well as in transcriptional and translational control. The sequence is that of Integration host factor subunit beta (ihfB) from Xylella fastidiosa (strain 9a5c).